A 760-amino-acid chain; its full sequence is Metal transporter cnnm-2 (760 aa).

The N-terminal stretch at 1–21 (MIIKVFLRLLLLCAHIVCIDG) is a signal peptide. The Extracellular portion of the chain corresponds to 22–153 (KLEIRPVVSG…ETFMPVWAQC (132 aa)). N88 carries N-linked (GlcNAc...) asparagine glycosylation. Residues 145–323 (TFMPVWAQCA…MENDACDIDL (179 aa)) enclose the CNNM transmembrane domain. The chain crosses the membrane as a helical span at residues 154–174 (AILCLLFSISALCSGLTLGLM). Topologically, residues 175–208 (ALTPQELSILMKSGSQREKKHAAAIYPIRCHGNR) are cytoplasmic. Residues 209–229 (LLCTVIIMNVIVNTGITLLFD) form a helical membrane-spanning segment. A topological domain (extracellular) is located at residue D230. The chain crosses the membrane as a helical span at residues 231-251 (LAEGLIAFVASTVGIVVFGEI). Over 252–261 (LPQSICVKYG) the chain is Cytoplasmic. The chain crosses the membrane as a helical span at residues 262-282 (LAVGANTIFITKFFMFLLFPI). Residues 283–760 (TWPLGKILDK…SVEELKPLME (478 aa)) lie on the Extracellular side of the membrane. N-linked (GlcNAc...) asparagine glycans are attached at residues N302 and N403. CBS domains follow at residues 344–406 (MTDI…NITV) and 442–512 (MVAK…ITDE). N-linked (GlcNAc...) asparagine glycans are attached at residues N528, N592, and N667. A disordered region spans residues 708-734 (DDFGSPTRKASILDSSPNSRKRSSTSV).

This sequence belongs to the ACDP family.

Its subcellular location is the cell membrane. Probable metal transporter. Probably acts redundantly with the other metal transport proteins cnnm-1, cnnm-3, cnnm-4 and cnnm-5 to regulate Mg(2+) homeostasis. This Caenorhabditis elegans protein is Metal transporter cnnm-2.